Here is a 199-residue protein sequence, read N- to C-terminus: Recombination protein RecR (199 aa).

Residues 58-73 form a C4-type zinc finger; the sequence is CKVCTNLTDQEVCNIC. The 96-residue stretch at 81–176 folds into the Toprim domain; the sequence is LLICVVEDPR…KVSRIAHGIP (96 aa).

This sequence belongs to the RecR family.

In terms of biological role, may play a role in DNA repair. It seems to be involved in an RecBC-independent recombinational process of DNA repair. It may act with RecF and RecO. This is Recombination protein RecR from Alkaliphilus oremlandii (strain OhILAs) (Clostridium oremlandii (strain OhILAs)).